A 240-amino-acid chain; its full sequence is MNTLFISDLHLHSSRPQITRAFFDFLRQQTHHTQALYILGDFFDAWIGDDDDDPLPNAVAEQLKKLNSAGVAIFLMHGNRDFLLGNSYAQRAGATLIAEGTVIDLYGRPALLLHGDDLCTLDTDYMAFRQQVRNPDWQAQLLAQPLAARRALAAQLRAQSQAINNMKAESIMDVTPDEVVRVMEEAGVDLLIHGHTHRPARHPLTVQGRPAERIVLGDWHHQGWCLDASATGLALRNWDI.

Asp-8, His-10, Asp-41, Asn-79, and His-114 together coordinate Mn(2+). A substrate-binding site is contributed by 79–80 (NR). Residues Asp-122, Ser-160, Asn-164, Lys-167, and His-195 each coordinate substrate. 2 residues coordinate Mn(2+): His-195 and His-197.

The protein belongs to the LpxH family. Mn(2+) is required as a cofactor.

The protein resides in the cell inner membrane. It catalyses the reaction UDP-2-N,3-O-bis[(3R)-3-hydroxytetradecanoyl]-alpha-D-glucosamine + H2O = 2-N,3-O-bis[(3R)-3-hydroxytetradecanoyl]-alpha-D-glucosaminyl 1-phosphate + UMP + 2 H(+). It functions in the pathway glycolipid biosynthesis; lipid IV(A) biosynthesis; lipid IV(A) from (3R)-3-hydroxytetradecanoyl-[acyl-carrier-protein] and UDP-N-acetyl-alpha-D-glucosamine: step 4/6. In terms of biological role, hydrolyzes the pyrophosphate bond of UDP-2,3-diacylglucosamine to yield 2,3-diacylglucosamine 1-phosphate (lipid X) and UMP by catalyzing the attack of water at the alpha-P atom. Involved in the biosynthesis of lipid A, a phosphorylated glycolipid that anchors the lipopolysaccharide to the outer membrane of the cell. In Cellvibrio japonicus (strain Ueda107) (Pseudomonas fluorescens subsp. cellulosa), this protein is UDP-2,3-diacylglucosamine hydrolase.